A 171-amino-acid chain; its full sequence is Small ribosomal subunit protein uS5 (171 aa).

An S5 DRBM domain is found at 12-75 (LKEKLISVNR…EKARRNMIQV (64 aa)).

It belongs to the universal ribosomal protein uS5 family. In terms of assembly, part of the 30S ribosomal subunit. Contacts proteins S4 and S8.

Its function is as follows. With S4 and S12 plays an important role in translational accuracy. Located at the back of the 30S subunit body where it stabilizes the conformation of the head with respect to the body. The polypeptide is Small ribosomal subunit protein uS5 (Buchnera aphidicola subsp. Baizongia pistaciae (strain Bp)).